We begin with the raw amino-acid sequence, 488 residues long: Zinc metalloproteinase-disintegrin 8 (488 aa).

An N-terminal signal peptide occupies residues 1–20 (MIQVLLVTICLAVFPYQGSS). The propeptide occupies 21–191 (IILESGNVND…KASQLNLPPE (171 aa)). The region spanning 198–396 (TYIELVVVAD…STTRCLHNEP (199 aa)) is the Peptidase M12B domain. Ca(2+) is bound by residues Glu-201 and Asp-285. The N-linked (GlcNAc...) asparagine glycan is linked to Asn-296. Disulfide bonds link Cys-309–Cys-391, Cys-349–Cys-373, and Cys-351–Cys-356. Zn(2+) is bound at residue His-334. Residue Glu-335 is part of the active site. Zn(2+)-binding residues include His-338 and His-344. Cys-391, Asn-394, Asn-409, Glu-413, Glu-416, and Asp-419 together coordinate Ca(2+). In terms of domain architecture, Disintegrin spans 404–488 (PPFCGNYFKE…ADCPRNGLYG (85 aa)). 7 disulfide bridges follow: Cys-407-Cys-426, Cys-418-Cys-436, Cys-420-Cys-431, Cys-430-Cys-453, Cys-444-Cys-450, Cys-449-Cys-474, and Cys-462-Cys-481. The Cell attachment site motif lies at 466 to 468 (RGD).

The protein belongs to the venom metalloproteinase (M12B) family. P-II subfamily. The cofactor is Zn(2+). In terms of tissue distribution, expressed by the venom gland.

The protein localises to the secreted. Inhibits ADP-induced platelet aggregation (probably by binding integrin alpha-IIb/beta-3 (ITGA2B/ITGB3)) and degrades fibrinogen. The polypeptide is Zinc metalloproteinase-disintegrin 8 (Crotalus adamanteus (Eastern diamondback rattlesnake)).